The chain runs to 321 residues: Ferredoxin--NADP reductase (321 aa).

FAD contacts are provided by Glu-33, Gln-41, Tyr-46, Val-86, Leu-119, Asp-277, and Ser-318.

This sequence belongs to the ferredoxin--NADP reductase type 2 family. As to quaternary structure, homodimer. Requires FAD as cofactor.

The catalysed reaction is 2 reduced [2Fe-2S]-[ferredoxin] + NADP(+) + H(+) = 2 oxidized [2Fe-2S]-[ferredoxin] + NADPH. The chain is Ferredoxin--NADP reductase from Lactococcus lactis subsp. cremoris (strain SK11).